The chain runs to 314 residues: Olfactory receptor 5B3 (314 aa).

Residues 1-23 (MENKTEVTQFILLGLTNDSELQV) are Extracellular-facing. 2 N-linked (GlcNAc...) asparagine glycosylation sites follow: Asn3 and Asn17. The helical transmembrane segment at 24 to 44 (PLFITFPFIYIITLVGNLGII) threads the bilayer. At 45–52 (VLIFWDSC) the chain is on the cytoplasmic side. A helical membrane pass occupies residues 53 to 73 (LHNPMYFFLSNLSLVDFCYSS). Over 74-97 (AVTPIVMAGFLIEDKVISYNACAA) the chain is Extracellular. Cysteines 95 and 187 form a disulfide. Residues 98–118 (QMYIFVAFATVENYLLASMAY) traverse the membrane as a helical segment. The Cytoplasmic segment spans residues 119–131 (DRYAAVCKPLHYT). A helical transmembrane segment spans residues 132–152 (TTMTTTVCARLAIGSYLCGFL). N-linked (GlcNAc...) asparagine glycosylation occurs at Asn153. The Extracellular portion of the chain corresponds to 153–194 (NASIHTGDTFSLSFCKSNEVHHFFCDIPAVMVLSCSDRHISE). Residues 195 to 215 (LVLIYVVSFNIFIALLVILIS) traverse the membrane as a helical segment. The Cytoplasmic portion of the chain corresponds to 216–235 (YTFIFITILKMHSASVYQKP). Residues 236–256 (LSTCASHFIAVGIFYGTIIFM) traverse the membrane as a helical segment. The Extracellular portion of the chain corresponds to 257–269 (YLQPSSSHSMDTD). The helical transmembrane segment at 270–290 (KMAPVFYTMVIPMLNPLVYSL) threads the bilayer. Residues 291-314 (RNKEVKSAFKKVVEKAKLSVGWSV) are Cytoplasmic-facing.

Belongs to the G-protein coupled receptor 1 family.

Its subcellular location is the cell membrane. Functionally, odorant receptor. In Homo sapiens (Human), this protein is Olfactory receptor 5B3 (OR5B3).